We begin with the raw amino-acid sequence, 107 residues long: U1-lycotoxin-Ls1b (107 aa).

Residues Met-1–Ser-20 form the signal peptide. Positions Glu-21–Arg-41 are excised as a propeptide. 4 disulfides stabilise this stretch: Cys-44–Cys-59, Cys-51–Cys-68, Cys-58–Cys-86, and Cys-70–Cys-84.

The protein belongs to the neurotoxin 19 (CSTX) family. 04 (U1-Lctx) subfamily. Expressed by the venom gland.

The protein resides in the secreted. The sequence is that of U1-lycotoxin-Ls1b from Lycosa singoriensis (Wolf spider).